We begin with the raw amino-acid sequence, 375 residues long: 23S rRNA (uracil(747)-C(5))-methyltransferase RlmC (375 aa).

Residues Cys-3, Cys-11, Cys-14, and Cys-87 each coordinate [4Fe-4S] cluster. Positions 212, 241, 262, and 307 each coordinate S-adenosyl-L-methionine. Cys-334 serves as the catalytic Nucleophile.

This sequence belongs to the class I-like SAM-binding methyltransferase superfamily. RNA M5U methyltransferase family. RlmC subfamily.

The enzyme catalyses uridine(747) in 23S rRNA + S-adenosyl-L-methionine = 5-methyluridine(747) in 23S rRNA + S-adenosyl-L-homocysteine + H(+). In terms of biological role, catalyzes the formation of 5-methyl-uridine at position 747 (m5U747) in 23S rRNA. This chain is 23S rRNA (uracil(747)-C(5))-methyltransferase RlmC, found in Escherichia fergusonii (strain ATCC 35469 / DSM 13698 / CCUG 18766 / IAM 14443 / JCM 21226 / LMG 7866 / NBRC 102419 / NCTC 12128 / CDC 0568-73).